We begin with the raw amino-acid sequence, 624 residues long: tRNA uridine 5-carboxymethylaminomethyl modification enzyme MnmG (624 aa).

14 to 19 contacts FAD; the sequence is GAGHAG. 273–287 lines the NAD(+) pocket; sequence GTRYCPSFEDKVVRF.

It belongs to the MnmG family. As to quaternary structure, homodimer. Heterotetramer of two MnmE and two MnmG subunits. FAD is required as a cofactor.

The protein resides in the cytoplasm. Functionally, NAD-binding protein involved in the addition of a carboxymethylaminomethyl (cmnm) group at the wobble position (U34) of certain tRNAs, forming tRNA-cmnm(5)s(2)U34. The polypeptide is tRNA uridine 5-carboxymethylaminomethyl modification enzyme MnmG (Syntrophomonas wolfei subsp. wolfei (strain DSM 2245B / Goettingen)).